Consider the following 983-residue polypeptide: MAAGLWALLLPLAAAVYEDQVGKFDWRQQYVGKLKFASLEAAQGSKKLLVGTEKNVVAALNSRSGEILWRHADKATPEGAIDAMLIHGQDAITVSSAGRILRSWETNIGGLNWETSLDTGSFQTASLVGLQDAVKYVAVLKKAAISLHYLSNGHQKWVEHLPESENTQYQMLYSRGAGVIHVLGVVPQSHLKVLTLSVEDGEVIEQTKVAAPWLKSLNGACGVVGEAVLVCADTATHSLYVCSLETEQEMKQIPLQSLDLEFADGFQPRVLATQPSVINASRTQFFLQLSPGHFSLLQCKQGLLSHLRDFQQAALVSFATTGEKTVAAVLTCRNELKPASSDGLHGNALEDSQKQEALTCSNQTYNINLYLVETGQRLLDTTITFNLEQNGAKPEQLYIQVFLKKDDSVGYRALVQTEDHMLMFLQQPGKVVWSREESLAEVVSLEMVDLPLTGAQAELEGEFGKKADGLLGMFLKRLSSQLILLQAWTAHLWKMFYDARKPRSQIKNEINIDNLARDEFNLQKMMVMVTASGKLFGIESSSGTILWKQYLRNVRPGASLKLMVQRTTAHFPHPPQCTLLVKDKETKMSFLYVFNPIFGKRSQVAPPVLKRPVLQTLLLPIMDQDYAKVLLLIDDEYKVTAFPATKNVLRQLEEMAHSIFFYLVDAEQGKLSGFRLKKDLTTEESWQVAIPTEVQRIVTVKGKRSSEHVHSQGRVMGDRSVLYKSLNPNLLAVVTESTDTHHERTFVGIYLIDGVTGRIIHSSVQKKAKGPVHIVHSENWVVYQYWNTKARRNEFTVLELYEGTEQYNATAFSSLDRPLLPQVLQQSYIFPSAISAMEATITERGITSRHLLIGLPSGAILSLPKALLDPRRPEIPTEQSREENLIPYSPDVQIHAERFINYNQTVSQIRGIYTSPSGLESTCLVVAYGLDIYQTRVYPSKQFDVLKDDYDYVLISSVLFGLVFATMITKRLAQVKLLNRAWR.

Residues 1–16 form the signal peptide; the sequence is MAAGLWALLLPLAAAV. The Lumenal segment spans residues 17 to 952; that stretch reads YEDQVGKFDW…FDVLKDDYDY (936 aa). Residues Cys221 and Cys231 are joined by a disulfide bond. Asn279 carries N-linked (GlcNAc...) asparagine glycosylation. An intrachain disulfide couples Cys332 to Cys360. N-linked (GlcNAc...) asparagine glycosylation is found at Asn362, Asn808, and Asn903. The helical transmembrane segment at 953 to 973 threads the bilayer; sequence VLISSVLFGLVFATMITKRLA. Over 974–983 the chain is Cytoplasmic; sequence QVKLLNRAWR.

It belongs to the EMC1 family. As to quaternary structure, component of the ER membrane protein complex (EMC).

It is found in the endoplasmic reticulum membrane. Its function is as follows. Part of the endoplasmic reticulum membrane protein complex (EMC) that enables the energy-independent insertion into endoplasmic reticulum membranes of newly synthesized membrane proteins. Preferentially accommodates proteins with transmembrane domains that are weakly hydrophobic or contain destabilizing features such as charged and aromatic residues. Involved in the cotranslational insertion of multi-pass membrane proteins in which stop-transfer membrane-anchor sequences become ER membrane spanning helices. It is also required for the post-translational insertion of tail-anchored/TA proteins in endoplasmic reticulum membranes. By mediating the proper cotranslational insertion of N-terminal transmembrane domains in an N-exo topology, with translocated N-terminus in the lumen of the ER, controls the topology of multi-pass membrane proteins like the G protein-coupled receptors. By regulating the insertion of various proteins in membranes, it is indirectly involved in many cellular processes. In Gallus gallus (Chicken), this protein is ER membrane protein complex subunit 1 (EMC1).